The following is an 89-amino-acid chain: Small ribosomal subunit protein bS20 (89 aa).

A compositionally biased stretch (basic residues) spans 1–12 (MANIKSAKKRVK). Positions 1–20 (MANIKSAKKRVKQTVVRNER) are disordered.

This sequence belongs to the bacterial ribosomal protein bS20 family.

In terms of biological role, binds directly to 16S ribosomal RNA. In Xylella fastidiosa (strain 9a5c), this protein is Small ribosomal subunit protein bS20.